A 104-amino-acid polypeptide reads, in one-letter code: Integration host factor subunit alpha (104 aa).

A disordered region spans residues G51–E70.

It belongs to the bacterial histone-like protein family. In terms of assembly, heterodimer of an alpha and a beta chain.

In terms of biological role, this protein is one of the two subunits of integration host factor, a specific DNA-binding protein that functions in genetic recombination as well as in transcriptional and translational control. This is Integration host factor subunit alpha from Ralstonia nicotianae (strain ATCC BAA-1114 / GMI1000) (Ralstonia solanacearum).